We begin with the raw amino-acid sequence, 246 residues long: MQWIDDGLVIGLRKHGETGVVLELMTPEHGRHLGLVHGGRSRRMQPMLQPGNTLRATWRARLDGALGAYAVEPLTLNASRLMDSGLALYGVAHLSALLRLLPERDPHPALYEAAQILIAHLDDPEIAPALMVRFELALLAGLGFGLDLSHCAATGANDALVYVSPKSGRAVSASAGEPFRDRLLPLPPFLRDRDQPGSGWRTPDTQDVREGFTLTGYFLDQHVWRPRAQDTPEERARFVALGTGQS.

It belongs to the RecO family.

Involved in DNA repair and RecF pathway recombination. In Methylorubrum extorquens (strain CM4 / NCIMB 13688) (Methylobacterium extorquens), this protein is DNA repair protein RecO.